Consider the following 572-residue polypeptide: Cytochrome P450 monooxygenase xilC (572 aa).

Cysteine 515 provides a ligand contact to heme.

It belongs to the cytochrome P450 family. Requires heme as cofactor.

It participates in secondary metabolite biosynthesis. Cytochrome P450 monooxygenase; part of the gene cluster that mediates the biosynthesis of the 6-methyl-2-pyrone derivative xylariolide D. XilC hydroxylates the 5-alkyl-6-methyl-2-pyrone backbone called prexylariolide D, produced by the highly reducing polyketide synthase xilA, on its side chain to form xylariolide D. The sequence is that of Cytochrome P450 monooxygenase xilC from Penicillium rubens (strain ATCC 28089 / DSM 1075 / NRRL 1951 / Wisconsin 54-1255) (Penicillium chrysogenum).